The chain runs to 273 residues: 4-hydroxy-tetrahydrodipicolinate reductase (273 aa).

Residues 12–17 and glutamate 38 each bind NAD(+); that span reads GAGGRM. Arginine 39 is an NADP(+) binding site. NAD(+) is bound by residues 102–104 and 126–129; these read GTT and AANF. The active-site Proton donor/acceptor is histidine 159. Residue histidine 160 participates in (S)-2,3,4,5-tetrahydrodipicolinate binding. The active-site Proton donor is the lysine 163. Residue 169–170 coordinates (S)-2,3,4,5-tetrahydrodipicolinate; sequence GT.

Belongs to the DapB family. In terms of assembly, homotetramer.

The protein resides in the cytoplasm. The catalysed reaction is (S)-2,3,4,5-tetrahydrodipicolinate + NAD(+) + H2O = (2S,4S)-4-hydroxy-2,3,4,5-tetrahydrodipicolinate + NADH + H(+). The enzyme catalyses (S)-2,3,4,5-tetrahydrodipicolinate + NADP(+) + H2O = (2S,4S)-4-hydroxy-2,3,4,5-tetrahydrodipicolinate + NADPH + H(+). It participates in amino-acid biosynthesis; L-lysine biosynthesis via DAP pathway; (S)-tetrahydrodipicolinate from L-aspartate: step 4/4. In terms of biological role, catalyzes the conversion of 4-hydroxy-tetrahydrodipicolinate (HTPA) to tetrahydrodipicolinate. This Klebsiella pneumoniae (strain 342) protein is 4-hydroxy-tetrahydrodipicolinate reductase.